A 79-amino-acid polypeptide reads, in one-letter code: Sigma-O factor regulatory protein RsoA (79 aa).

Functionally, together with RNA polymerase sigma factor SigO, positively regulates the expression of at least three operons, including oxdC-yvrL, sigO-rsoA and yvrJ. Required for the acid stress-dependent induction of the oxalate decarboxylase oxdC. In Bacillus subtilis (strain 168), this protein is Sigma-O factor regulatory protein RsoA (rsoA).